A 187-amino-acid polypeptide reads, in one-letter code: Large ribosomal subunit protein bL12cx (187 aa).

The N-terminal 54 residues, 1-54 (MASTTLSIATTIRSSSPLTSASTHHFLSKPTAIEFPFRLSSSSSHRAINLRPIS), are a transit peptide targeting the chloroplast.

It belongs to the bacterial ribosomal protein bL12 family.

The protein localises to the plastid. The protein resides in the chloroplast. This is Large ribosomal subunit protein bL12cx (RPL12C) from Arabidopsis thaliana (Mouse-ear cress).